The chain runs to 243 residues: ATP synthase subunit a, chloroplastic (243 aa).

A run of 5 helical transmembrane segments spans residues 32–52 (AQVLITSWFVLGLLLGIALIA), 91–111 (IPFVGTLFLFIFVSNWSGALI), 130–150 (INTTVALALLTSVAYFYAGLN), 195–215 (LVVAVLVSLVPLVIPVPMMFL), and 216–236 (GLFTSGIQALIFATLAGAYIG).

The protein belongs to the ATPase A chain family. In terms of assembly, F-type ATPases have 2 components, CF(1) - the catalytic core - and CF(0) - the membrane proton channel. CF(1) has five subunits: alpha(3), beta(3), gamma(1), delta(1), epsilon(1). CF(0) has four main subunits: a, b, b' and c.

It localises to the plastid. Its subcellular location is the chloroplast thylakoid membrane. Key component of the proton channel; it plays a direct role in the translocation of protons across the membrane. The sequence is that of ATP synthase subunit a, chloroplastic from Chaetosphaeridium globosum (Charophycean green alga).